The primary structure comprises 707 residues: tRNA 5-methylaminomethyl-2-thiouridine biosynthesis bifunctional protein MnmC (707 aa).

The interval 1–264 is tRNA (mnm(5)s(2)U34)-methyltransferase; it reads MTKKLEHEYI…KREMLFGTFE (264 aa). Residues 312-707 are FAD-dependent cmnm(5)s(2)U34 oxidoreductase; sequence IGGGLAGAHA…LFRDLTRNRI (396 aa).

The protein in the N-terminal section; belongs to the methyltransferase superfamily. tRNA (mnm(5)s(2)U34)-methyltransferase family. It in the C-terminal section; belongs to the DAO family. Requires FAD as cofactor.

It is found in the cytoplasm. It catalyses the reaction 5-aminomethyl-2-thiouridine(34) in tRNA + S-adenosyl-L-methionine = 5-methylaminomethyl-2-thiouridine(34) in tRNA + S-adenosyl-L-homocysteine + H(+). Its function is as follows. Catalyzes the last two steps in the biosynthesis of 5-methylaminomethyl-2-thiouridine (mnm(5)s(2)U) at the wobble position (U34) in tRNA. Catalyzes the FAD-dependent demodification of cmnm(5)s(2)U34 to nm(5)s(2)U34, followed by the transfer of a methyl group from S-adenosyl-L-methionine to nm(5)s(2)U34, to form mnm(5)s(2)U34. This Saccharophagus degradans (strain 2-40 / ATCC 43961 / DSM 17024) protein is tRNA 5-methylaminomethyl-2-thiouridine biosynthesis bifunctional protein MnmC.